The primary structure comprises 248 residues: Flavodoxin/ferredoxin--NADP reductase (248 aa).

In terms of domain architecture, FAD-binding FR-type spans 2 to 101 (ADWVTGKVTK…SEAAGFFVLD (100 aa)). Residues 50–53 (RAYS), tyrosine 66, 74–76 (KLS), and threonine 116 contribute to the FAD site. NADP(+) is bound by residues 143–144 (AR), 173–174 (SR), arginine 184, 214–216 (NPQ), and aspartate 220. 247 to 248 (YW) contacts FAD.

Belongs to the ferredoxin--NADP reductase type 1 family. Requires FAD as cofactor.

The protein localises to the cytoplasm. It carries out the reaction 2 reduced [2Fe-2S]-[ferredoxin] + NADP(+) + H(+) = 2 oxidized [2Fe-2S]-[ferredoxin] + NADPH. It catalyses the reaction reduced [flavodoxin] + NADP(+) = oxidized [flavodoxin] + NADPH + 2 H(+). In terms of biological role, transports electrons between flavodoxin or ferredoxin and NADPH. The polypeptide is Flavodoxin/ferredoxin--NADP reductase (fpr) (Shigella flexneri).